The following is a 310-amino-acid chain: Methionyl-tRNA formyltransferase (310 aa).

110–113 (SLLP) contacts (6S)-5,6,7,8-tetrahydrofolate.

It belongs to the Fmt family.

The catalysed reaction is L-methionyl-tRNA(fMet) + (6R)-10-formyltetrahydrofolate = N-formyl-L-methionyl-tRNA(fMet) + (6S)-5,6,7,8-tetrahydrofolate + H(+). Functionally, attaches a formyl group to the free amino group of methionyl-tRNA(fMet). The formyl group appears to play a dual role in the initiator identity of N-formylmethionyl-tRNA by promoting its recognition by IF2 and preventing the misappropriation of this tRNA by the elongation apparatus. The protein is Methionyl-tRNA formyltransferase of Clostridium acetobutylicum (strain ATCC 824 / DSM 792 / JCM 1419 / IAM 19013 / LMG 5710 / NBRC 13948 / NRRL B-527 / VKM B-1787 / 2291 / W).